Reading from the N-terminus, the 62-residue chain is MIEKGQEPKSRYMPIAFILEVYYTIFGPSIYCPECNTFWRGFYSQHMKYCHFCQTELQERKF.

This is an uncharacterized protein from His1 virus (isolate Australia/Victoria) (His1V).